The sequence spans 179 residues: Guanosine-3',5'-bis(diphosphate) 3'-pyrophosphohydrolase MESH1 (179 aa).

Position 2 is an N-acetylglycine (G2). K25 is subject to N6-acetyllysine. An HD domain is found at 32 to 127 (YINHPIGVAR…VKLADKLYNL (96 aa)). Residues H35, H61, and D62 each contribute to the Mn(2+) site. Active-site nucleophile residues include E65 and D66. K97 is subject to N6-acetyllysine. Mn(2+) is bound at residue D122. The residue at position 123 (K123) is an N6-acetyllysine.

The protein belongs to the MESH1 family. Mn(2+) is required as a cofactor.

It catalyses the reaction guanosine 3',5'-bis(diphosphate) + H2O = GDP + diphosphate + H(+). PpGpp hydrolyzing enzyme involved in starvation response. The protein is Guanosine-3',5'-bis(diphosphate) 3'-pyrophosphohydrolase MESH1 (HDDC3) of Homo sapiens (Human).